A 252-amino-acid chain; its full sequence is Eukaryotic translation initiation factor 3 subunit K (252 aa).

Residues 46–225 (FDCYANLALL…VKVPTNKENE (180 aa)) enclose the PCI domain.

The protein belongs to the eIF-3 subunit K family. As to quaternary structure, component of the eukaryotic translation initiation factor 3 (eIF-3) complex.

The protein localises to the cytoplasm. Component of the eukaryotic translation initiation factor 3 (eIF-3) complex, which is involved in protein synthesis of a specialized repertoire of mRNAs and, together with other initiation factors, stimulates binding of mRNA and methionyl-tRNAi to the 40S ribosome. The eIF-3 complex specifically targets and initiates translation of a subset of mRNAs involved in cell proliferation. This Aspergillus terreus (strain NIH 2624 / FGSC A1156) protein is Eukaryotic translation initiation factor 3 subunit K.